Here is a 565-residue protein sequence, read N- to C-terminus: DNA primase (565 aa).

The CHC2-type zinc-finger motif lies at 37-61 (CPFHSETNPSFYVHPGLKIYHCFGC). A Toprim domain is found at 248 to 329 (GFFVITEGYF…NVLVATPSPY (82 aa)). 3 residues coordinate Mg(2+): E254, D298, and D300.

Belongs to the DnaG primase family. In terms of assembly, monomer. Interacts with DnaB. Requires Zn(2+) as cofactor. It depends on Mg(2+) as a cofactor.

It carries out the reaction ssDNA + n NTP = ssDNA/pppN(pN)n-1 hybrid + (n-1) diphosphate.. Its function is as follows. RNA polymerase that catalyzes the synthesis of short RNA molecules used as primers for DNA polymerase during DNA replication. The protein is DNA primase of Thermotoga maritima (strain ATCC 43589 / DSM 3109 / JCM 10099 / NBRC 100826 / MSB8).